The following is a 1094-amino-acid chain: Probable serine/threonine-protein kinase kinX (1094 aa).

In terms of domain architecture, Protein kinase spans 22–281 (LDFISEIGSG…QTLKQIKTTL (260 aa)). ATP-binding positions include 28 to 36 (IGSGGFGKV) and Lys49. Asp146 functions as the Proton acceptor in the catalytic mechanism. 2 disordered regions span residues 301-884 (TTNG…SVED) and 946-1083 (IKVE…PNNK). Residues 330-344 (YDDDDDDDDDDDDND) are compositionally biased toward acidic residues. The span at 351–373 (SDNSNSNVTLESNSNYNSSTING) shows a compositional bias: polar residues. Over residues 374–387 (QEQQEQQEQQQQQQ) the composition is skewed to low complexity. Residues 393–408 (DEGEIEQDDDNIEVYD) are compositionally biased toward acidic residues. Over residues 410-424 (DYQKKLEEHQKELLE) the composition is skewed to basic and acidic residues. 3 stretches are compositionally biased toward acidic residues: residues 433–454 (STDE…EEEQ), 480–496 (DDED…EGDE), and 503–523 (DFDE…DEDE). Low complexity-rich tracts occupy residues 526–542 (IQYY…LQKQ) and 564–585 (RQLQ…QHQQ). Acidic residues predominate over residues 587-602 (YDDDDDDDDEEEEEYD). Residues 603–639 (DVIRHDTDSEEESKDKTPLPWDQHFEKQKESENKVEQ) are compositionally biased toward basic and acidic residues. Positions 650 to 661 (QETEQQQQQQQQ) are enriched in low complexity. Residues 670–801 (PTKVEDVKVE…EPVEEVKVEE (132 aa)) show a composition bias toward basic and acidic residues. The 40 X 9 AA approximate repeats of V-K-V-E-E-P-V-E-E stretch occupies residues 676-978 (VKVETEEQTK…PVKVEVASPV (303 aa)). Residues 802 to 816 (PVEEVEAEESVQEPV) are compositionally biased toward acidic residues. Basic and acidic residues-rich tracts occupy residues 817-884 (EEVK…SVED) and 946-971 (IKVE…EPVK). Composition is skewed to low complexity over residues 972 to 985 (VEVA…QPPQ) and 992 to 1011 (VVST…SNSP). The span at 1016 to 1031 (VKQPQQQEIEVNSTPI) shows a compositional bias: polar residues. Residues 1032 to 1050 (KQQQQQQQTPTQQTQTPTK) show a composition bias toward low complexity.

The protein belongs to the protein kinase superfamily. TKL Ser/Thr protein kinase family.

The catalysed reaction is L-seryl-[protein] + ATP = O-phospho-L-seryl-[protein] + ADP + H(+). It carries out the reaction L-threonyl-[protein] + ATP = O-phospho-L-threonyl-[protein] + ADP + H(+). In Dictyostelium discoideum (Social amoeba), this protein is Probable serine/threonine-protein kinase kinX (kinX).